A 312-amino-acid polypeptide reads, in one-letter code: MPIRIPEQLPAQNVLLGENIFTMDMDRAANQDIRPLEVGILNLMPNKIETEVQLLRLLSNTPLQINVDLIRIDNQAPKNTPQSHMDAFYHDFSSVVNKKYDGLIVTGAPLALIDYEEVKYWETMTTILEWAQRHVNSTLYLCWAAHAAMYHFYGITRELRDEKFSGVFKHKVNDPNNELLRGFDPSFYAPHSRYGHIDTSLYNSVDGLNVVAESDEVGAYIVASEDKRMVFVTGHPEYDPDTLKDEYLRDIAAGQTPPIPKNYFEGDDPATSPIVQWRSHGSLLFTNWLNYYVYQTTPYDLSQLAEKSQPKR.

The Acyl-thioester intermediate role is filled by Cys142. Residues Lys163 and Ser192 each contribute to the substrate site. Residue His235 is the Proton acceptor of the active site. Glu237 is an active-site residue. Substrate is bound at residue Arg249.

This sequence belongs to the MetA family.

The protein localises to the cytoplasm. The enzyme catalyses L-homoserine + succinyl-CoA = O-succinyl-L-homoserine + CoA. Its pathway is amino-acid biosynthesis; L-methionine biosynthesis via de novo pathway; O-succinyl-L-homoserine from L-homoserine: step 1/1. In terms of biological role, transfers a succinyl group from succinyl-CoA to L-homoserine, forming succinyl-L-homoserine. This Alteromonas mediterranea (strain DSM 17117 / CIP 110805 / LMG 28347 / Deep ecotype) protein is Homoserine O-succinyltransferase.